The primary structure comprises 400 residues: Phosphoglycerate kinase (400 aa).

Substrate is bound by residues 22 to 24 (DLN), Arg-37, 60 to 63 (HLGR), Arg-119, and Arg-159. ATP is bound by residues Lys-209, Gly-297, Glu-328, and 354–357 (GGDS).

This sequence belongs to the phosphoglycerate kinase family. Monomer.

The protein resides in the cytoplasm. The enzyme catalyses (2R)-3-phosphoglycerate + ATP = (2R)-3-phospho-glyceroyl phosphate + ADP. It functions in the pathway carbohydrate degradation; glycolysis; pyruvate from D-glyceraldehyde 3-phosphate: step 2/5. The protein is Phosphoglycerate kinase of Saccharopolyspora erythraea (strain ATCC 11635 / DSM 40517 / JCM 4748 / NBRC 13426 / NCIMB 8594 / NRRL 2338).